Here is a 168-residue protein sequence, read N- to C-terminus: Prolyl-tRNA synthetase associated domain-containing protein 1 (168 aa).

Belongs to the PRORSD1 family.

The sequence is that of Prolyl-tRNA synthetase associated domain-containing protein 1 (prorsd1p) from Xenopus laevis (African clawed frog).